The primary structure comprises 544 residues: Shootin-1 (544 aa).

3 coiled-coil regions span residues 17–100, 141–184, and 259–349; these read SNQV…LKRK, IVIT…EKHD, and EALQ…QVSN. The disordered stretch occupies residues 343 to 544; the sequence is KLQQVSNPPT…TTTICTEQLS (202 aa). A compositionally biased stretch (pro residues) spans 352–371; sequence TAAPAPPPPPPPPPPPPPPS. Low complexity predominate over residues 372-383; sequence SSSSNPLSSLLS. Residues 397–412 show a composition bias toward basic and acidic residues; that stretch reads LVEKDSSEKSPEKDVR. Residues 469-479 are compositionally biased toward pro residues; that stretch reads SSSPGPRPPSP. The stretch at 480–504 forms a coiled coil; it reads SEKSELEKALQRRREAVKSAKNNTN. Positions 481–497 are enriched in basic and acidic residues; sequence EKSELEKALQRRREAVK. The span at 499–544 shows a compositional bias: polar residues; that stretch reads AKNNTNPSSVVDLTQIKQTRSEPGQNTGDQETLRHTTTTICTEQLS.

This sequence belongs to the shootin family.

Its subcellular location is the perikaryon. It localises to the cell projection. It is found in the axon. The protein resides in the growth cone. The protein localises to the cytoplasm. Its subcellular location is the cytoskeleton. It localises to the filopodium. It is found in the lamellipodium. Its function is as follows. Involved in the generation of internal asymmetric signals required for neuronal polarization and neurite outgrowth. The polypeptide is Shootin-1 (Danio rerio (Zebrafish)).